The following is a 492-amino-acid chain: 3-ketoacyl-CoA synthase 5 (492 aa).

The next 2 helical transmembrane spans lie at 20–40 and 59–79; these read LINNFLTLLLIPVIATVAIEL and LLHILCSSFLIIFVSTVYFMS. Positions 76-365 constitute an FAE domain; sequence YFMSKPRTVY…FLSSLIGRKI (290 aa). Catalysis depends on residues cysteine 220, histidine 299, histidine 383, histidine 387, histidine 416, and asparagine 420.

The protein belongs to the thiolase-like superfamily. Chalcone/stilbene synthases family. As to expression, expressed in siliques, flowers, leaves and seedlings.

It localises to the membrane. It catalyses the reaction a very-long-chain acyl-CoA + malonyl-CoA + H(+) = a very-long-chain 3-oxoacyl-CoA + CO2 + CoA. The protein operates within lipid metabolism; fatty acid biosynthesis. With respect to regulation, inhibited by K3 herbicides such as alachlor, allidochlor, anilofos, cafenstrole and flufenacet. Strongly inhibited by metazachlor and mefluidide. Mediates mostly the synthesis of VLCFAs from 26 to 30 carbons in length (e.g. C20:1, C26, C28, C30). The polypeptide is 3-ketoacyl-CoA synthase 5 (Arabidopsis thaliana (Mouse-ear cress)).